The chain runs to 526 residues: GMP synthase [glutamine-hydrolyzing] (526 aa).

Positions 9–208 constitute a Glutamine amidotransferase type-1 domain; sequence RILILDFGSQ…LVNICGCKQL (200 aa). The active-site Nucleophile is the C86. Active-site residues include H182 and E184. In terms of domain architecture, GMPS ATP-PPase spans 209–401; sequence WTPGRIIEDA…LGLPYDMVYR (193 aa). 236–242 provides a ligand contact to ATP; the sequence is SGGVDSS.

As to quaternary structure, homodimer.

It carries out the reaction XMP + L-glutamine + ATP + H2O = GMP + L-glutamate + AMP + diphosphate + 2 H(+). The protein operates within purine metabolism; GMP biosynthesis; GMP from XMP (L-Gln route): step 1/1. Its function is as follows. Catalyzes the synthesis of GMP from XMP. The chain is GMP synthase [glutamine-hydrolyzing] from Hahella chejuensis (strain KCTC 2396).